The primary structure comprises 695 residues: UvrABC system protein C (695 aa).

Residues 1 to 10 are compositionally biased toward basic and acidic residues; it reads MNHDPAETRD. The disordered stretch occupies residues 1–44; it reads MNHDPAETRDTAAAPLADTESPSPVSPELTPHPAPAAQDIDTAT. The 79-residue stretch at 88–166 folds into the GIY-YIG domain; sequence TSPGVYRMLN…IKQLRPRFNV (79 aa). The 36-residue stretch at 276-311 folds into the UVR domain; that stretch reads RAVKQELAVEMEKASNELEFETAALYRDRLAALSAI.

It belongs to the UvrC family. Interacts with UvrB in an incision complex.

It is found in the cytoplasm. Functionally, the UvrABC repair system catalyzes the recognition and processing of DNA lesions. UvrC both incises the 5' and 3' sides of the lesion. The N-terminal half is responsible for the 3' incision and the C-terminal half is responsible for the 5' incision. The protein is UvrABC system protein C of Rhodopseudomonas palustris (strain HaA2).